A 2170-amino-acid polypeptide reads, in one-letter code: MKRKERIARRLEGIENDSQPILLQSCTGLVTHRLLEEDTPRYMRATDPASPHIGRSKEEEDTPGSSLEKQTPSKYCIETSGIHSSGSMDTHSLESKAERIARYKAERRRQLAEKYGLTLDPEADSEYLSRYAKSRKDPDVTERRGKSDKQEEQSKDANSRHSRTESGPRTSLVASQDCTPLGSNMSDQEQLLNVENQRRVQDPPLGEDGSSAFFSERSISFPEVPRSPKQIPSSPLQQPASPNHPGDSPLPTEARASTGKPTHEWFLQRDSEGDTPSLINWPSRVKVREKLVKEESARSSPELTSESLTQRRQQPAPAHFLPIQSESSTFDRVTSKAVSSLQPSQSGVLPTDPVHAIKLVTMDTPESTSEFSWVGSATPKVIKSTTLKILEGGSRDAPVLHICESKAEDWLSPEPLERSPKSLLTSEDDRLVRGHKDPSGNKDLDKAIICSIDVESERERQVQHLPTQRTGRSEMLLYVQSGPVSQDATLTSHTKEASPKKRKVLARSLSDYTGPPQLQVPRHKDEAPSQELELQSSRAEGPGAEASVLDTRVSVAQLRNIFMESTRASKKPELQSRVERSAEGIGLPMERERGSRKPRRYLSPGESRKTSERFRTQPITSAERKESDRYPSGSEIPVVEDEEKVDERAKLSVAAKRLLFREMEKSFDEHTVPKRHSRNAAVEQRLRRLQDRSHTQPITTEEVVIAATEPIPASCSGVTHPVTARLPSPTVARSSVQPARLQASAHQKALARDQANEGRESAEPGEPDSSTLSLAEKLALFNKLSQPVSKAISTRNRIDVRQRRMNARYQTQPVTLGEVEQVQSGKLISFSPTVNTSVSIMASAVAPTYAGDLRKLSVDNNTSATDYKSPPAENSDSPVRSILKPQAWRPLVEHSGSKGMPGESGKTESKNALTVAAEDSGVQTRGAFEEEEEPSYPILGRVREGDGQKEPKHVVLRRGSLELGNPSAAHLGDELKEVSTAKSSLQENLDLKDKQASEENTDVETVMRKFSLKEFGETTSEQTEVAARKASVQMATPGAWKQQESSEQLAEKLFKNPCAMFASGEVKVPVGDSFLDSPSKTMSIKERLALLKKSGEEDWKNRLIRKQEYGKATGGLHTQEVEQSLKKKRVTESRESQMTIEERKHLITVREEAWKTKGRGAANDSTQFTVAGRMVKKGLASPTSITPISSPLCSKSRGTTPVSKPLEDIEARPDMQLESDLKLDRLETFLRRLNNKVAGIQETVLTVTGKSVKEVMKLDDDETFAKFYRSVDHSIPRSPVELEEDFDVIFDPYAPKLTSSVAEHKRQVRPKRRVQASKNPLKLLAARDDLLQEYTEQRLNVAFMESKRMKVEKMSSNSNFSEVTLAGLASRENFSNINLRSVNLMEQNSNNSAMPYKKLMLLQIKGRRHVQTRLVEPRASSLNSGDCFLLLSPQYCFLWVGEFSNVIEKAKASELATLIQTKRELGCRATYIQTIEEGINTHTHAAKDFWKLLGGQTSYQSAGDPKEDELYETAIIETNCVYRLTDDKLVPDDDYWGKIPKCSLLQSKEVLVFDFGSEVYVWHGKEVTLAQRKIAFQLAKHLWNGTFDYENCDINPLDPGECNPLIPRKGQGRPDWAIFGRVTEHNETILFKEKFLDWTELKRPTEKNSGEVVQQKDDPRADVKPYDVTRMVATPQITAGTILDGVNVGRGYGLVEGDDRRQFEIATVSVDVWHILEFDYSRLPRQSIGQFHEGDAYVVKWKYMASTAVGSRQKGEHLVRVAGKEKCVYFFWQGRHSTVSEKGTSALMTVELDEERGAQVQVLQGKEPPCFLQCFQGGMVVHSGRREEEEENVQSEWRLYCVRGEVPMEGNLLEVACHCSSLRSRTSMVVLNINKALIYLWHGCKAQGHTKEVGRTAANKIKEECPLEAGLHSSSNVTIHECDEGSEPLGFWDALGRRDRKAYDCMLQDPGSFNFAPRLFILSSSSGDFSATEFVYPAQAPSAVSSMPFLQEDLYSAPQPALFLVDNHHEVYLWQGWWPTENKITGSARIRWASDRKSAMETVLQYCRGKNLKRPPPKSYLIHAGLEPLTFTNMFPSWEHREDIAEITEMDTEVSNQITLVEDVLAKLCKTIYPLADLLARPLPEGVDPLKLEIYLTDEDFEFALDMSRDEFNALPTWKQVNLKKSKGLF.

An interaction with MYLK region spans residues 1–167 (MKRKERIARR…NSRHSRTESG (167 aa)). 5 disordered regions span residues 37-94 (EDTP…HSLE), 107-327 (RRRQ…QSES), 413-444 (PEPL…NKDL), 511-546 (DYTG…GAEA), and 567-643 (RASK…EDEE). Serine 50 carries the phosphoserine modification. 2 stretches are compositionally biased toward polar residues: residues 63–73 (PGSSLEKQTPS) and 81–90 (GIHSSGSMDT). Basic and acidic residues predominate over residues 134 to 166 (SRKDPDVTERRGKSDKQEEQSKDANSRHSRTES). Positions 167 to 195 (GPRTSLVASQDCTPLGSNMSDQEQLLNVE) are enriched in polar residues. Serine 220, serine 227, and serine 241 each carry phosphoserine. Positions 230-241 (QIPSSPLQQPAS) are enriched in polar residues. Composition is skewed to basic and acidic residues over residues 261–272 (PTHEWFLQRDSE) and 286–297 (KVREKLVKEESA). Residues 298–313 (RSSPELTSESLTQRRQ) show a composition bias toward polar residues. A phosphoserine mark is found at serine 299 and serine 300. Residues 427–444 (EDDRLVRGHKDPSGNKDL) show a composition bias toward basic and acidic residues. Basic and acidic residues-rich tracts occupy residues 570 to 582 (KKPE…ERSA) and 606 to 615 (ESRKTSERFR). Serine 632, serine 666, serine 728, and serine 761 each carry phosphoserine. The interval 743–771 (ASAHQKALARDQANEGRESAEPGEPDSST) is disordered. The segment covering 750–762 (LARDQANEGRESA) has biased composition (basic and acidic residues). Tyrosine 809 bears the Phosphotyrosine mark. At threonine 811 the chain carries Phosphothreonine. Residues serine 857, serine 877, and serine 881 each carry the phosphoserine modification. Positions 887-909 (AWRPLVEHSGSKGMPGESGKTES) are disordered. Phosphoserine occurs at positions 960, 1011, 1031, and 1077. A disordered region spans residues 1117–1137 (HTQEVEQSLKKKRVTESRESQ). Basic and acidic residues predominate over residues 1119–1137 (QEVEQSLKKKRVTESRESQ). Arginine 1159 is modified (omega-N-methylarginine). Phosphoserine is present on residues serine 1181 and serine 1184. At threonine 1186 the chain carries Phosphothreonine. Residues serine 1190, serine 1278, and serine 1361 each carry the phosphoserine modification. The tract at residues 1375 to 1643 (SNINLRSVNL…KFLDWTELKR (269 aa)) is interaction with NEB. 5 Gelsolin-like repeats span residues 1397-1496 (KKLM…LGGQ), 1516-1638 (IETN…FLDW), 1708-1818 (VSVD…FQGG), 1837-1938 (WRLY…LGRR), and 1971-2078 (ATEF…FPSW). The HP domain maps to 2107 to 2170 (KLCKTIYPLA…VNLKKSKGLF (64 aa)).

Belongs to the villin/gelsolin family. In terms of assembly, associates with F-actin. Interacts with NEB. Interacts with MYH9. Interacts with MYLK. Interacts with TASOR. Interacts with TRIP6. Interacts with DYNLT1. Interacts with KIF14; at midbody during cytokinesis. Expressed in the heart, tongue and granular cells within the cerebellum.

The protein localises to the cell membrane. The protein resides in the cytoplasm. Its subcellular location is the cytoskeleton. It localises to the cell projection. It is found in the invadopodium. The protein localises to the podosome. The protein resides in the midbody. Its subcellular location is the cleavage furrow. Its function is as follows. Forms a high-affinity link between the actin cytoskeleton and the membrane. Is among the first costameric proteins to assemble during myogenesis and it contributes to myogenic membrane structure and differentiation. Appears to be involved in myosin II assembly. May modulate myosin II regulation through MLCK during cell spreading, an initial step in cell migration. May play a role in invadopodial function. Functionally, may be involved in modulation of focal adhesions. Supervillin-mediated down-regulation of focal adhesions involves binding to TRIP6. Plays a role in cytokinesis through KIF14 interaction. This chain is Supervillin (Svil), found in Mus musculus (Mouse).